A 596-amino-acid chain; its full sequence is Nuclear receptor subfamily 2 group C member 2 (596 aa).

Phosphoserine; by MAPK is present on serine 19. The residue at position 46 (serine 46) is a Phosphoserine. Serine 55 and serine 68 each carry phosphoserine; by MAPK. A Phosphoserine modification is found at serine 98. The nuclear receptor DNA-binding region spans 114–189 (VEYCVVCGDK…MGMKMESVQS (76 aa)). 2 NR C4-type zinc fingers span residues 117 to 137 (CVVC…CEGC) and 153 to 177 (CRSS…LKKC). Residue lysine 192 forms a Glycyl lysine isopeptide (Lys-Gly) (interchain with G-Cter in SUMO2) linkage. Phosphoserine is present on serine 219. Lysine 231 carries the post-translational modification N6-acetyllysine. Residues 341–583 (GSIHVISRDQ…SIIPYILKME (243 aa)) form the NR LBD domain.

The protein belongs to the nuclear hormone receptor family. NR2 subfamily. As to quaternary structure, homodimer; can bind DNA as homodimer. Heterodimer; binds DNA as a heterodimer with NR2C1 required for chromatin remodeling and for binding to promoter regions such as globin DR1 repeats. Interacts with NR2C2AP; the interaction represses selective NR2C2-mediated transcriptional activity. Interacts with PCAF; the interaction preferentially occurs on the non-phosphorylated form and induces NR2C2-mediated transactivation activity and does not require the ligand-binding domain. Interacts (MAPK-mediated phosphorylated form) with NRIP1; the interaction promotes repression of NR2C2-mediated activity. Interacts with NLRP10. Interacts (via ligand-binding region) with transcriptional corepressor JAZF1; the interaction promotes NR2C2-mediated transcriptional repression. In terms of processing, phosphorylation on Ser-19 and Ser-68 is an important regulator of NR2C2-mediated transcriptional activity. Phosphorylation on these residues recruits the corepressor, NRIP1, leading to transcripional repression, whereas the non-phosphorylated form preferentially recruits the coactivator, PCAF. As to expression, expressed in hepatocytes. Also expressed in granule cells of the hippocampus and the cerebellum.

It is found in the nucleus. In terms of biological role, orphan nuclear receptor that can act as a repressor or activator of transcription. An important repressor of nuclear receptor signaling pathways such as retinoic acid receptor, retinoid X, vitamin D3 receptor, thyroid hormone receptor and estrogen receptor pathways. May regulate gene expression during the late phase of spermatogenesis. Activates transcriptional activity of LHCG and is antagonist of PPARA-mediated transactivation. Together with NR2C1, forms the core of the DRED (direct repeat erythroid-definitive) complex that represses embryonic and fetal globin transcription including that of GATA1. Binds to hormone response elements (HREs) consisting of two 5'-AGGTCA-3' half site direct repeat consensus sequences. Plays a fundamental role in early embryonic development and embryonic stem cells. Required for normal spermatogenesis and cerebellum development. Appears to be important for neurodevelopmentally regulated behavior. The protein is Nuclear receptor subfamily 2 group C member 2 (Nr2c2) of Rattus norvegicus (Rat).